The primary structure comprises 313 residues: Calcyphosin-2 (313 aa).

EF-hand domains follow at residues 144 to 179 (RILT…FHLE), 180 to 215 (VSEK…EMNE), and 216 to 251 (YRKS…KKHS). The Ca(2+) site is built by D193, N195, N197, K199, and E204.

In Macaca fascicularis (Crab-eating macaque), this protein is Calcyphosin-2 (CAPS2).